We begin with the raw amino-acid sequence, 376 residues long: Lactosylceramide 1,3-N-acetyl-beta-D-glucosaminyltransferase (376 aa).

The Cytoplasmic portion of the chain corresponds to 1-13 (MRLFVSRRVKRWK). A helical; Signal-anchor for type II membrane protein membrane pass occupies residues 14 to 34 (IFHFFVTCFILSFMVFWSPIN). Residues 35–376 (NYIMSHMKSY…NSYPCWAAFA (342 aa)) are Lumenal-facing. An N-linked (GlcNAc...) asparagine glycan is attached at Asn57.

Belongs to the glycosyltransferase 31 family. In terms of tissue distribution, highly expressed in adult spleen, placenta and cerebellar Purkinje cells where it colocalizes with HNK-1. Expressed at lower level in brain, lung, thymus and muscle.

Its subcellular location is the golgi apparatus membrane. It catalyses the reaction a beta-D-Gal-(1-&gt;4)-beta-D-Glc-(1&lt;-&gt;1)-Cer(d18:1(4E)) + UDP-N-acetyl-alpha-D-glucosamine = a beta-D-GlcNAc-(1-&gt;3)-beta-D-Gal-(1-&gt;4)-beta-D-Glc-(1&lt;-&gt;1)-Cer(d18:1(4E)) + UDP + H(+). It carries out the reaction a neolactoside nLc4Cer(d18:1(4E)) + UDP-N-acetyl-alpha-D-glucosamine = a neolactoside IV(3)-beta-GlcNAc-nLc4Cer(d18:1(4E)) + UDP + H(+). It participates in protein modification; protein glycosylation. Its function is as follows. Beta-1,3-N-acetylglucosaminyltransferase that plays a key role in the synthesis of lacto- or neolacto-series carbohydrate chains on glycolipids, notably by participating in biosynthesis of HNK-1 and Lewis X carbohydrate structures. Has strong activity toward lactosylceramide (LacCer) and neolactotetraosylceramide (nLc(4)Cer; paragloboside), resulting in the synthesis of Lc(3)Cer and neolactopentaosylceramide (nLc(5)Cer), respectively. Plays a central role in regulating neolacto-series glycolipid synthesis during embryonic development. The polypeptide is Lactosylceramide 1,3-N-acetyl-beta-D-glucosaminyltransferase (Mus musculus (Mouse)).